Consider the following 115-residue polypeptide: Nucleoid-associated protein P9211_00201 (115 aa).

This sequence belongs to the YbaB/EbfC family. As to quaternary structure, homodimer.

The protein localises to the cytoplasm. It localises to the nucleoid. Functionally, binds to DNA and alters its conformation. May be involved in regulation of gene expression, nucleoid organization and DNA protection. The protein is Nucleoid-associated protein P9211_00201 of Prochlorococcus marinus (strain MIT 9211).